Reading from the N-terminus, the 51-residue chain is Large ribosomal subunit protein bL33 (51 aa).

The protein belongs to the bacterial ribosomal protein bL33 family.

The sequence is that of Large ribosomal subunit protein bL33 from Colwellia psychrerythraea (strain 34H / ATCC BAA-681) (Vibrio psychroerythus).